A 138-amino-acid polypeptide reads, in one-letter code: Acidic phospholipase A2 Ts-A3 (138 aa).

The first 16 residues, Met-1–Gly-16, serve as a signal peptide directing secretion. 7 disulfides stabilise this stretch: Cys-42–Cys-132, Cys-44–Cys-60, Cys-59–Cys-111, Cys-65–Cys-138, Cys-66–Cys-104, Cys-73–Cys-97, and Cys-91–Cys-102. Positions 43, 45, and 47 each coordinate Ca(2+). His-63 is a catalytic residue. Asp-64 is a Ca(2+) binding site. Residue Asp-105 is part of the active site.

Ca(2+) serves as cofactor. Expressed by the venom gland.

The protein localises to the secreted. It carries out the reaction a 1,2-diacyl-sn-glycero-3-phosphocholine + H2O = a 1-acyl-sn-glycero-3-phosphocholine + a fatty acid + H(+). Functionally, snake venom phospholipase A2 (PLA2) that shows a moderate inhibition of ADP-induced human platelet aggregation when tested on platelet rich plasma. Exhibits high hydrolytic activities and prefers the anionic micelles (dPPC with deoxycholate) to the zwitterionic micelles (dPPC with Triton X-100). PLA2 catalyzes the calcium-dependent hydrolysis of the 2-acyl groups in 3-sn-phosphoglycerides. This Trimeresurus stejnegeri (Chinese green tree viper) protein is Acidic phospholipase A2 Ts-A3.